We begin with the raw amino-acid sequence, 100 residues long: uncharacterized protein (100 aa).

2 helical membrane-spanning segments follow: residues 50–70 (LLIF…FSLF) and 75–95 (DVFL…SPEV).

It is found in the membrane. This is an uncharacterized protein from Saccharomyces cerevisiae (strain ATCC 204508 / S288c) (Baker's yeast).